The following is a 917-amino-acid chain: MCRPALARLLLLQLLLLKLYLGKGAMKECDKDQFQCRNERCIPAVWACDEDNDCSDNSDEADCPKKTCAETDFACDNGHCIPDRWKCDGEEECSDGSDESEAACTKQVCPAEKISCGDLSNKCIPSSWRCDGQKDCESGIDEAGCAPACSPDEFQCSNKTCISINFVCDGYNNCGDGSDEKKCSPLTCSPNEFQCNNSVCIPQLWVCDNQADCEDHSDESIERCGYDAKAFNTCAAHEFQCGNGECILLNWKCDGDEDCKDKSDEQDCPLVTCRPDEFQCGDGTCIHGAKQCDKVHDCPDNSDEAGCVQESACESPSKFQCKSGECIDGGKVCDLHRDCRDWSDEPLKECGINECSLNNGGCSHICKDLKIGYECECPPGYKLLDKKTCGDIDECENPDACSQICINYKGDYKCECYEGYEMDTLSKNCKAVGKSPYLIFTNRHEVRKIDLVKRDYSRIIPMLKNVVALDVEVATNRIYWCDLFYRKIYSAYIDKASDTAEQVILIDSQLNSPEGVAIDWVHKNIYWTDSGNKTISVATADGSRRRTVFNSDLSEPRAIAVDPTRRFMYWSDWGDKAKIEKAGLNGVGRQVLVSDNIEWPNGITLDLLNQRLYWVDSKLHSLSCIDFNGSNREVLISSIDDLSHPFGLAVFEDRVFWTDLENEAIFSANRLSGLDISVLAENLNNPHDIVVFHELKQPKAPDSCELSPQPNGGCEYLCLPAPHISPRSPKFTCACPDNMWLGPDMKKCYKELPTTPATVEVPTTTTSHPAATSTVTVTGSANTTTAVIPRAVSEATTAIPSSHSTTSLLIDSEMTTGNSNLSQHYSNNGQGFDSTVTAAVIGIVIPVVVIGLLCMGGYLIWRNWKRKNTKSMNFDNPVYRKTTEEEDEDEIHIGRTAQIGHVYPARVALSLEDDGLP.

Residues methionine 1–glycine 24 form the signal peptide. The Extracellular segment spans residues alanine 25–alanine 838. LDL-receptor class A domains are found at residues glutamate 28 to proline 64, threonine 67 to threonine 105, valine 108 to alanine 146, alanine 148 to serine 184, and threonine 187 to glycine 225. 29 cysteine pairs are disulfide-bonded: cysteine 29/cysteine 41, cysteine 36/cysteine 54, cysteine 48/cysteine 63, cysteine 68/cysteine 80, cysteine 75/cysteine 93, cysteine 87/cysteine 104, cysteine 109/cysteine 123, cysteine 116/cysteine 136, cysteine 130/cysteine 145, cysteine 149/cysteine 161, cysteine 156/cysteine 174, cysteine 168/cysteine 183, cysteine 188/cysteine 200, cysteine 195/cysteine 213, cysteine 207/cysteine 224, cysteine 241/cysteine 259, cysteine 253/cysteine 268, cysteine 273/cysteine 285, cysteine 280/cysteine 298, cysteine 292/cysteine 307, cysteine 313/cysteine 326, cysteine 321/cysteine 339, cysteine 333/cysteine 350, cysteine 355/cysteine 366, cysteine 362/cysteine 375, cysteine 377/cysteine 389, cysteine 395/cysteine 405, cysteine 401/cysteine 414, and cysteine 416/cysteine 429. 6 residues coordinate Ca(2+): tryptophan 46, aspartate 49, aspartate 51, aspartate 53, aspartate 59, and glutamate 60. The N-linked (GlcNAc...) asparagine glycan is linked to asparagine 158. N-linked (GlcNAc...) asparagine glycosylation is present at asparagine 196. LDL-receptor class A domains are found at residues threonine 272–valine 308 and alanine 312–glycine 351. Residues proline 346–glycine 390 form the EGF-like 1 domain. The EGF-like 2; calcium-binding domain occupies aspartate 391–lysine 430. LDL-receptor class B repeat units lie at residues asparagine 476 to histidine 522, lysine 523 to arginine 565, arginine 566 to asparagine 609, glutamine 610 to glutamate 652, and aspartate 653 to leucine 695. Asparagine 532 carries an N-linked (GlcNAc...) asparagine glycan. N-linked (GlcNAc...) asparagine glycosylation occurs at asparagine 628. The segment at threonine 754 to glutamate 813 is clustered O-linked oligosaccharides. N-linked (GlcNAc...) asparagine glycosylation is found at asparagine 782 and asparagine 820. A helical transmembrane segment spans residues alanine 839–tryptophan 861. Residues arginine 862–proline 917 are Cytoplasmic-facing.

The protein belongs to the LDLR family. As to quaternary structure, homooligomer. As to expression, mainly in brain.

It localises to the cell membrane. Functionally, cell surface receptor for Reelin (RELN) and apolipoprotein E (apoE)-containing ligands. Also binds alpha2-macroglobulin. LRP8 participates in transmitting the extracellular Reelin signal to intracellular signaling processes, by binding to DAB1 on its cytoplasmic tail. Reelin acts via both the VLDL receptor (VLDLR) and LRP8 to regulate DAB1 tyrosine phosphorylation and microtubule function in neurons. LRP8 has higher affinity for Reelin than VLDLR. LRP8 is thus a key component of the Reelin pathway which governs neuronal layering of the forebrain during embryonic brain development. Not required for endocytic uptake of SEPP1 in the kidney which is mediated by LRP2. In Gallus gallus (Chicken), this protein is Low-density lipoprotein receptor-related protein 8 (LRP8).